The sequence spans 526 residues: Cytochrome P450 4F5 (526 aa).

A heme-binding site is contributed by cysteine 470.

Belongs to the cytochrome P450 family. It depends on heme as a cofactor. High expression in liver and kidney. Lower expression in brain.

Its subcellular location is the endoplasmic reticulum membrane. It is found in the microsome membrane. It carries out the reaction an organic molecule + reduced [NADPH--hemoprotein reductase] + O2 = an alcohol + oxidized [NADPH--hemoprotein reductase] + H2O + H(+). The protein is Cytochrome P450 4F5 (Cyp4f5) of Rattus norvegicus (Rat).